The sequence spans 412 residues: L-threonine:uridine-5'-aldehyde transaldolase (412 aa).

An N6-(pyridoxal phosphate)lysine modification is found at lysine 229.

The protein belongs to the SHMT family. Pyridoxal 5'-phosphate serves as cofactor.

It carries out the reaction uridine-5'-aldehyde + L-threonine = (5'S,6'S)-C-glycyluridine + acetaldehyde. It participates in antibiotic biosynthesis. In terms of biological role, transaldolase involved in the biosynthesis of the capuramycin-type nucleoside antibiotic A-102395. Catalyzes the condensation of L-threonine and uridine-5'-aldehyde to form 5'-C-glycyluridine (GlyU). The protein is L-threonine:uridine-5'-aldehyde transaldolase of Amycolatopsis sp.